We begin with the raw amino-acid sequence, 1056 residues long: PH and SEC7 domain-containing protein 4 (1056 aa).

Basic and acidic residues predominate over residues 25-42; sequence LEPHPGECPRETCSHEDP. 6 disordered regions span residues 25-71, 87-149, 195-239, 340-362, 388-533, and 546-581; these read LEPH…SGVE, CQEQ…QNRS, LPGD…QWGA, GAPA…APSA, VQPW…GDVQ, and LRTP…LANG. Composition is skewed to polar residues over residues 88–99 and 128–137; these read QEQTRATDPPES and NTASPGSPVN. Phosphoserine occurs at positions 131, 134, and 143. Residues 207–220 are compositionally biased toward acidic residues; that stretch reads ENEDSGEDSSEPEG. Ser-413 is modified (phosphoserine). The segment covering 414–423 has biased composition (basic and acidic residues); that stretch reads QDRDEREGGH. Positions 438-456 are enriched in low complexity; that stretch reads RSPASSPEPSSPESESRGP. Residues Ser-448, Ser-469, and Ser-491 each carry the phosphoserine modification. 2 stretches are compositionally biased toward polar residues: residues 466–476 and 486–502; these read QEGSPQLQHHS and DASQ…QPSS. A compositionally biased stretch (basic and acidic residues) spans 504–522; that stretch reads KKKEAGEAPKPGEEVKSEG. One can recognise an SEC7 domain in the interval 544–736; the sequence is ENLRTPMNSS…KALYWSIRSE (193 aa). The segment covering 548–567 has biased composition (polar residues); the sequence is TPMNSSWLPGSPMPQAQSPE. Residues 776–892 form the PH domain; the sequence is PTYKQGILAR…WIARINLAAA (117 aa). Residues 921 to 976 are a coiled coil; it reads SSLEEQHRSHENCLDAAADDLLDLQRNLPERRGRGRELEEHRLRKEYLEYEKTRYE. Positions 1004–1056 are disordered; it reads AGGTREPKLSLKKSHSSPSLHQDEAPTTAKVKRNISERRTYRKIIPKRNRNQL. 2 positions are modified to phosphoserine: Ser-1019 and Ser-1022. A compositionally biased stretch (basic residues) spans 1043–1056; the sequence is TYRKIIPKRNRNQL.

In terms of tissue distribution, widely expressed. Highest levels of expression are found in placenta, pancreas, spleen, thymus and peripheral blood.

The protein localises to the cell membrane. It localises to the cell projection. It is found in the ruffle membrane. Guanine nucleotide exchange factor for ARF6 and ARL14/ARF7. Through ARL14 activation, controls the movement of MHC class II-containing vesicles along the actin cytoskeleton in dendritic cells. Involved in membrane recycling. Interacts with several phosphatidylinositol phosphate species, including phosphatidylinositol 3,4-bisphosphate, phosphatidylinositol 3,5-bisphosphate and phosphatidylinositol 4,5-bisphosphate. The chain is PH and SEC7 domain-containing protein 4 (PSD4) from Homo sapiens (Human).